We begin with the raw amino-acid sequence, 203 residues long: MTQQEIVTINAELRDITKTKAMHSLRKKGNIPGIIYGKGHDNVNLTLSAKEFTKQYKSGSLSAHLIELNISGKKEYALVRDIQLHVVKDTVQHVDFQFVDKGSEIKIDIPLSFVNESKAPGIKLGGVLNVLCRSIAVKCSPDKIPQVIEVDLSGKMIGQSIHINDVKLPEGVKFVAHEEENFTIVTISAADSDVEEPQAETEE.

It belongs to the bacterial ribosomal protein bL25 family. CTC subfamily. Part of the 50S ribosomal subunit; part of the 5S rRNA/L5/L18/L25 subcomplex. Contacts the 5S rRNA. Binds to the 5S rRNA independently of L5 and L18.

Its function is as follows. This is one of the proteins that binds to the 5S RNA in the ribosome where it forms part of the central protuberance. This is Large ribosomal subunit protein bL25 from Wolbachia pipientis wMel.